Reading from the N-terminus, the 412-residue chain is F-box/WD repeat-containing protein 4 (412 aa).

The region spanning 25–71 is the F-box domain; it reads GPALWRLPEELLLLICSYLDMRALGRLAQVCRWLRRFTSCDLLWRRI. WD repeat units follow at residues 154–190, 193–229, 236–277, 283–321, 327–366, and 373–409; these read RPLG…IHKI, TFTV…VWPL, QCLH…IWDL, MTHL…YWDL, KCVM…LWDR, and HAFP…VLDF.

As to quaternary structure, part of a SCF (SKP1-cullin-F-box) protein ligase complex. Interacts with POUF51. In terms of tissue distribution, expressed in brain, kidney, lung and liver.

Its function is as follows. Probably recognizes and binds to some phosphorylated proteins and promotes their ubiquitination and degradation. Likely to be involved in key signaling pathways crucial for normal limb development. May participate in Wnt signaling. This Homo sapiens (Human) protein is F-box/WD repeat-containing protein 4 (FBXW4).